A 262-amino-acid chain; its full sequence is Adenosylcobinamide-GDP ribazoletransferase (262 aa).

Transmembrane regions (helical) follow at residues 11 to 31 (LNLFFVATGFFTRLPTPSWVI), 43 to 63 (YFGLVGLLIGLICALVYWFTQ), 66 to 86 (LPTSVAVLLAMVAGVLVTGGF), 121 to 141 (AIVLALILLLRWQLLVELALF), 146 to 166 (AITGFIVAHTLSRVLAASLIF), and 199 to 219 (IFVLFWLNGLAAFVLFISLWA).

This sequence belongs to the CobS family. The cofactor is Mg(2+).

It is found in the cell inner membrane. The catalysed reaction is alpha-ribazole + adenosylcob(III)inamide-GDP = adenosylcob(III)alamin + GMP + H(+). It catalyses the reaction alpha-ribazole 5'-phosphate + adenosylcob(III)inamide-GDP = adenosylcob(III)alamin 5'-phosphate + GMP + H(+). The protein operates within cofactor biosynthesis; adenosylcobalamin biosynthesis; adenosylcobalamin from cob(II)yrinate a,c-diamide: step 7/7. In terms of biological role, joins adenosylcobinamide-GDP and alpha-ribazole to generate adenosylcobalamin (Ado-cobalamin). Also synthesizes adenosylcobalamin 5'-phosphate from adenosylcobinamide-GDP and alpha-ribazole 5'-phosphate. The chain is Adenosylcobinamide-GDP ribazoletransferase from Shewanella denitrificans (strain OS217 / ATCC BAA-1090 / DSM 15013).